Reading from the N-terminus, the 226-residue chain is NifU-like protein 1, chloroplastic (226 aa).

A chloroplast-targeting transit peptide spans 1-76; the sequence is MQTTTVPMAA…PVTAVQLPLT (76 aa).

The protein belongs to the NifU family. As to quaternary structure, homodimer; disulfide-linked.

The protein resides in the plastid. It is found in the chloroplast stroma. In terms of biological role, molecular scaffold for [Fe-S] cluster assembly of chloroplastic iron-sulfur proteins. The sequence is that of NifU-like protein 1, chloroplastic (NIFU1) from Oryza sativa subsp. japonica (Rice).